The following is a 207-amino-acid chain: Casparian strip membrane protein 3 (207 aa).

Topologically, residues 1 to 45 are cytoplasmic; that stretch reads MDSTKSTEETAINIPRESSSTKHKIAVAAVKAVATPHKRGGMKRG. The helical transmembrane segment at 46-66 threads the bilayer; the sequence is VAIFDFILRICALAAALAATA. Topologically, residues 67-95 are extracellular; it reads TMGTTDQTLPFFTQFFQFQASYDDLPTFT. The chain crosses the membrane as a helical span at residues 96 to 116; it reads FFVIANAIASGYLVLSLPFSI. Over 117–128 the chain is Cytoplasmic; the sequence is VAIVRPHVTGVK. The chain crosses the membrane as a helical span at residues 129–149; that stretch reads LLLLILDTVLVAFTTAAAASA. The Extracellular portion of the chain corresponds to 150–181; that stretch reads AAIVYLAHNGNSNTNWFAICQQFNDFCQRTSG. Residues 182–202 form a helical membrane-spanning segment; sequence AVVASFIAAAIFIFLVVLSAV. Residues 203-207 lie on the Cytoplasmic side of the membrane; that stretch reads ALRRH.

It belongs to the Casparian strip membrane proteins (CASP) family. As to quaternary structure, homodimer and heterodimers.

Its subcellular location is the cell membrane. Functionally, regulates membrane-cell wall junctions and localized cell wall deposition. Required for establishment of the Casparian strip membrane domain (CSD) and the subsequent formation of Casparian strips, a cell wall modification of the root endodermis that determines an apoplastic barrier between the intraorganismal apoplasm and the extraorganismal apoplasm and prevents lateral diffusion. This Erythranthe guttata (Yellow monkey flower) protein is Casparian strip membrane protein 3.